A 360-amino-acid chain; its full sequence is BLOC-1-related complex subunit 6 (360 aa).

Over residues 1–10 the composition is skewed to basic and acidic residues; that stretch reads MEAARGRLGP. The interval 1 to 201 is disordered; the sequence is MEAARGRLGP…AGAGGGRRAT (201 aa). The span at 23-35 shows a compositional bias: polar residues; sequence VTFSGRPSRTLSK. Position 41 is a phosphothreonine (Thr41). Over residues 71 to 83 the composition is skewed to basic and acidic residues; it reads HRPELDTWEDKPS. Residues 89–100 are compositionally biased toward low complexity; the sequence is SGARGSRGTSGS. At Ser130 the chain carries Phosphoserine. Positions 144–156 are enriched in acidic residues; sequence EGDDDDDGDDEEA. At Ser173 the chain carries Phosphoserine. Residues 179–198 show a composition bias toward gly residues; the sequence is GACGGGGSSSSGEAGAGGGR. Residue Thr201 is modified to Phosphothreonine. The residue at position 204 (Ser204) is a Phosphoserine.

Belongs to the BORCS6 family. Component of the BLOC-one-related complex (BORC) which is composed of BLOC1S1, BLOC1S2, BORCS5, BORCS6, BORCS7, BORCS8, KXD1 and SNAPIN.

The protein resides in the lysosome membrane. Its function is as follows. As part of the BORC complex may play a role in lysosomes movement and localization at the cell periphery. Associated with the cytosolic face of lysosomes, the BORC complex may recruit ARL8B and couple lysosomes to microtubule plus-end-directed kinesin motor. The sequence is that of BLOC-1-related complex subunit 6 from Rattus norvegicus (Rat).